We begin with the raw amino-acid sequence, 426 residues long: Enolase (426 aa).

Position 163 (Gln-163) interacts with (2R)-2-phosphoglycerate. Glu-205 acts as the Proton donor in catalysis. Asp-242, Glu-286, and Asp-313 together coordinate Mg(2+). (2R)-2-phosphoglycerate contacts are provided by Lys-338, Arg-367, Ser-368, and Lys-389. Residue Lys-338 is the Proton acceptor of the active site.

The protein belongs to the enolase family. The cofactor is Mg(2+).

Its subcellular location is the cytoplasm. It is found in the secreted. It localises to the cell surface. The catalysed reaction is (2R)-2-phosphoglycerate = phosphoenolpyruvate + H2O. The protein operates within carbohydrate degradation; glycolysis; pyruvate from D-glyceraldehyde 3-phosphate: step 4/5. Catalyzes the reversible conversion of 2-phosphoglycerate (2-PG) into phosphoenolpyruvate (PEP). It is essential for the degradation of carbohydrates via glycolysis. The sequence is that of Enolase from Helicobacter pylori (strain G27).